The following is a 102-amino-acid chain: Acid shock protein (102 aa).

Positions 1–21 are cleaved as a signal peptide; the sequence is MKKVLALVVAAAMGLSSAAFA. Residues 22-41 show a composition bias toward low complexity; that stretch reads AETATTPAPTATTTKAAPAK. Positions 22–58 are excised as a propeptide; sequence AETATTPAPTATTTKAAPAKTTHHKKQHKAAPAQKAQ. Residues 22–102 form a disordered region; it reads AETATTPAPT…PAKPAAQPAA (81 aa). Positions 80–90 are enriched in basic residues; sequence AAKKHAKKHSH. The span at 91 to 102 shows a compositional bias: low complexity; it reads QQPAKPAAQPAA.

It belongs to the Asr family. Post-translationally, proteolytic processing gives rise to the active protein.

The protein localises to the periplasm. Required for growth and/or survival at acidic conditions. The polypeptide is Acid shock protein (Escherichia coli O17:K52:H18 (strain UMN026 / ExPEC)).